The primary structure comprises 361 residues: tRNA N6-adenosine threonylcarbamoyltransferase (361 aa).

Residues histidine 110 and histidine 114 each contribute to the Fe cation site. Residues 132-136 (LVSGG), aspartate 165, glycine 178, aspartate 182, and asparagine 289 each bind substrate. Residue aspartate 317 coordinates Fe cation.

The protein belongs to the KAE1 / TsaD family. It depends on Fe(2+) as a cofactor.

It is found in the cytoplasm. It carries out the reaction L-threonylcarbamoyladenylate + adenosine(37) in tRNA = N(6)-L-threonylcarbamoyladenosine(37) in tRNA + AMP + H(+). Required for the formation of a threonylcarbamoyl group on adenosine at position 37 (t(6)A37) in tRNAs that read codons beginning with adenine. Is involved in the transfer of the threonylcarbamoyl moiety of threonylcarbamoyl-AMP (TC-AMP) to the N6 group of A37, together with TsaE and TsaB. TsaD likely plays a direct catalytic role in this reaction. In Nitratidesulfovibrio vulgaris (strain ATCC 29579 / DSM 644 / CCUG 34227 / NCIMB 8303 / VKM B-1760 / Hildenborough) (Desulfovibrio vulgaris), this protein is tRNA N6-adenosine threonylcarbamoyltransferase.